Consider the following 507-residue polypeptide: Cobyric acid synthase (507 aa).

The 198-residue stretch at 259-456 (EIQIAVIKLP…LHGIFDNGTW (198 aa)) folds into the GATase cobBQ-type domain. Catalysis depends on cysteine 340, which acts as the Nucleophile. Histidine 448 is a catalytic residue.

This sequence belongs to the CobB/CobQ family. CobQ subfamily.

It functions in the pathway cofactor biosynthesis; adenosylcobalamin biosynthesis. In terms of biological role, catalyzes amidations at positions B, D, E, and G on adenosylcobyrinic A,C-diamide. NH(2) groups are provided by glutamine, and one molecule of ATP is hydrogenolyzed for each amidation. The polypeptide is Cobyric acid synthase (Prochlorococcus marinus (strain SARG / CCMP1375 / SS120)).